Reading from the N-terminus, the 167-residue chain is Aphrodisin (167 aa).

An N-terminal signal peptide occupies residues 1–16 (MVKILLLALVFSLAHA). Pyrrolidone carboxylic acid is present on Gln-17. Cystine bridges form between Cys-54–Cys-58 and Cys-73–Cys-165. 2 N-linked (GlcNAc...) asparagine glycosylation sites follow: Asn-57 and Asn-85.

The protein belongs to the calycin superfamily. Lipocalin family. As to expression, expressed in the vagina, uterus, and Bartholin's glands of female hamsters. Secreted in vaginal discharge.

It localises to the secreted. In terms of biological role, acts as an aphrodisiac pheromone, reliably eliciting copulatory behavior from male hamster. This chain is Aphrodisin, found in Cricetus cricetus (Black-bellied hamster).